Here is a 447-residue protein sequence, read N- to C-terminus: Ribulose bisphosphate carboxylase large chain (447 aa).

2 residues coordinate substrate: asparagine 89 and threonine 139. Lysine 141 acts as the Proton acceptor in catalysis. Lysine 143 lines the substrate pocket. Residues lysine 167, aspartate 169, and glutamate 170 each coordinate Mg(2+). An N6-carboxylysine modification is found at lysine 167. The active-site Proton acceptor is the histidine 260. Arginine 261, histidine 293, and serine 345 together coordinate substrate.

Belongs to the RuBisCO large chain family. Type I subfamily. Heterohexadecamer of 8 large chains and 8 small chains; disulfide-linked. The disulfide link is formed within the large subunit homodimers. It depends on Mg(2+) as a cofactor. The disulfide bond which can form in the large chain dimeric partners within the hexadecamer appears to be associated with oxidative stress and protein turnover.

It localises to the plastid. It is found in the chloroplast. The enzyme catalyses 2 (2R)-3-phosphoglycerate + 2 H(+) = D-ribulose 1,5-bisphosphate + CO2 + H2O. The catalysed reaction is D-ribulose 1,5-bisphosphate + O2 = 2-phosphoglycolate + (2R)-3-phosphoglycerate + 2 H(+). Functionally, ruBisCO catalyzes two reactions: the carboxylation of D-ribulose 1,5-bisphosphate, the primary event in carbon dioxide fixation, as well as the oxidative fragmentation of the pentose substrate in the photorespiration process. Both reactions occur simultaneously and in competition at the same active site. The sequence is that of Ribulose bisphosphate carboxylase large chain from Convolvulus tricolor (Dwarf morning glory).